Reading from the N-terminus, the 460-residue chain is NADH-ubiquinone oxidoreductase chain 4 (460 aa).

13 consecutive transmembrane segments (helical) span residues 22 to 42 (WLWPTALTQSMLIALGSITWL), 61 to 81 (PLSTPLLVLSCWLLPLMLLAS), 94 to 113 (RMYITLLATLQLFLILAFGA), 117 to 139 (IMFYVMFEATLIPTLLVITRWGN), 148 to 168 (TYFLFYTLAGSLPLLVALLML), 195 to 217 (IWWAACMIAFLVKMPLYGMHLWL), 225 to 245 (PVAGSMVLAAVLLKLGGYGMM), 258 to 278 (MVYPFIVLALWGVIITGSICL), 285 to 304 (SLIAYSSVSHMGLVAGGILI), 308 to 330 (WGFTGALILMIAHGLASSALFCL), 351 to 371 (IALPLMTTWWFIASLANLALP), 394 to 414 (LILTGIGTLITAAYSLYMFLM), and 436 to 456 (LLMALHLIPLLLIILKPALLW).

Belongs to the complex I subunit 4 family.

Its subcellular location is the mitochondrion membrane. The catalysed reaction is a ubiquinone + NADH + 5 H(+)(in) = a ubiquinol + NAD(+) + 4 H(+)(out). In terms of biological role, core subunit of the mitochondrial membrane respiratory chain NADH dehydrogenase (Complex I) that is believed to belong to the minimal assembly required for catalysis. Complex I functions in the transfer of electrons from NADH to the respiratory chain. The immediate electron acceptor for the enzyme is believed to be ubiquinone. The protein is NADH-ubiquinone oxidoreductase chain 4 (MT-ND4) of Gadus morhua (Atlantic cod).